We begin with the raw amino-acid sequence, 499 residues long: Probable cytosol aminopeptidase (499 aa).

The Mn(2+) site is built by lysine 269 and aspartate 274. Lysine 281 is a catalytic residue. Mn(2+) contacts are provided by aspartate 292, aspartate 351, and glutamate 353. Arginine 355 is a catalytic residue.

The protein belongs to the peptidase M17 family. It depends on Mn(2+) as a cofactor.

The protein localises to the cytoplasm. It carries out the reaction Release of an N-terminal amino acid, Xaa-|-Yaa-, in which Xaa is preferably Leu, but may be other amino acids including Pro although not Arg or Lys, and Yaa may be Pro. Amino acid amides and methyl esters are also readily hydrolyzed, but rates on arylamides are exceedingly low.. The enzyme catalyses Release of an N-terminal amino acid, preferentially leucine, but not glutamic or aspartic acids.. Its function is as follows. Presumably involved in the processing and regular turnover of intracellular proteins. Catalyzes the removal of unsubstituted N-terminal amino acids from various peptides. The sequence is that of Probable cytosol aminopeptidase from Actinobacillus pleuropneumoniae serotype 7 (strain AP76).